Consider the following 127-residue polypeptide: UPF0102 protein Reut_A3265 (127 aa).

This sequence belongs to the UPF0102 family.

The polypeptide is UPF0102 protein Reut_A3265 (Cupriavidus pinatubonensis (strain JMP 134 / LMG 1197) (Cupriavidus necator (strain JMP 134))).